The following is a 1127-amino-acid chain: Caprin-2 (1127 aa).

Residues 67–108 form a disordered region; sequence YQSPSGHSEEEREGNMKSAKPQVNHSQHGESQRALSPLQSTL. Over residues 99-108 the composition is skewed to polar residues; it reads RALSPLQSTL. 2 coiled-coil regions span residues 129–156 and 194–216; these read LKHKIRNIEKKKLKLEDYKDRLKSGEHL and AQKKAQRREHMLKLEAEKKKLRT. Disordered regions lie at residues 382-614, 642-753, and 922-975; these read NKQG…KDPV, DKPS…SSSV, and QCYK…PVDV. Basic and acidic residues-rich tracts occupy residues 402-432 and 440-464; these read KRWDMLTEPDGQEKKQESFKSWEASGKHQEV and EQRKQDTSKLRSTLPEEQKKQEISK. Polar residues-rich tracts occupy residues 512 to 531 and 544 to 567; these read PKSWTPSMQSEQNTTKSWTT and TPKSWENNVESQKHSLTSQSQISP. Positions 588–597 are enriched in basic and acidic residues; it reads LNTEPKDVPK. Polar residues-rich tracts occupy residues 665–714 and 741–753; these read KEQN…TSET and QGFQSPPASSSSV. A phosphoserine mark is found at serine 948 and serine 949. Residues 956 to 970 show a composition bias toward polar residues; that stretch reads TFNSGDSGQGDSRSM. The region spanning 993–1127 is the C1q domain; that stretch reads PQQMRVAFSA…TFSGYLLYQD (135 aa). Ca(2+) is bound by residues aspartate 1078 and glutamate 1084.

The protein belongs to the caprin family. As to quaternary structure, homotrimer; via C1q domain. Found in a complex with LRP6, CCNY and CDK14 during G2/M stage; CAPRIN2 functions as a scaffold for the complex by binding to CCNY via its N terminus and to CDK14 via its C terminus. Interacts with LRP5. Interacts with LRP6. Detected in all tissues tested with highest levels of expression in brain and spleen.

It is found in the cytoplasm. The protein resides in the mitochondrion. Its subcellular location is the cell membrane. In terms of biological role, promotes phosphorylation of the Wnt coreceptor LRP6, leading to increased activity of the canonical Wnt signaling pathway. Facilitates constitutive LRP6 phosphorylation by CDK14/CCNY during G2/M stage of the cell cycle, which may potentiate cells for Wnt signaling. May regulate the transport and translation of mRNAs, modulating for instance the expression of proteins involved in synaptic plasticity in neurons. Involved in regulation of growth as erythroblasts shift from a highly proliferative state towards their terminal phase of differentiation. May be involved in apoptosis. The polypeptide is Caprin-2 (Homo sapiens (Human)).